The chain runs to 313 residues: Ribosomal RNA small subunit methyltransferase H (313 aa).

Residues 35–37, Asp55, Phe79, Asp101, and Gln108 each bind S-adenosyl-L-methionine; that span reads GGH.

Belongs to the methyltransferase superfamily. RsmH family.

It localises to the cytoplasm. It catalyses the reaction cytidine(1402) in 16S rRNA + S-adenosyl-L-methionine = N(4)-methylcytidine(1402) in 16S rRNA + S-adenosyl-L-homocysteine + H(+). Its function is as follows. Specifically methylates the N4 position of cytidine in position 1402 (C1402) of 16S rRNA. The sequence is that of Ribosomal RNA small subunit methyltransferase H from Salmonella newport (strain SL254).